We begin with the raw amino-acid sequence, 83 residues long: U1-theraphotoxin-Hs1f (83 aa).

Residues 1–21 form the signal peptide; that stretch reads MKVTLIAILTCAAVLVLHTTA. A propeptide spanning residues 22 to 48 is cleaved from the precursor; sequence AEELEESQLMEVGMPDTELAAVDEERL. 3 disulfides stabilise this stretch: Cys51–Cys64, Cys55–Cys75, and Cys69–Cys80.

It belongs to the neurotoxin 12 (Hwtx-2) family. 02 (Hwtx-2) subfamily. As to expression, expressed by the venom gland.

It is found in the secreted. In terms of biological role, lethal neurotoxin that blocks neuromuscular transmission. In Cyriopagopus schmidti (Chinese bird spider), this protein is U1-theraphotoxin-Hs1f.